The sequence spans 297 residues: 4-hydroxy-tetrahydrodipicolinate synthase (297 aa).

Thr-46 is a binding site for pyruvate. Residue Tyr-134 is the Proton donor/acceptor of the active site. The active-site Schiff-base intermediate with substrate is Lys-163. Residue Ile-205 coordinates pyruvate.

It belongs to the DapA family. As to quaternary structure, homotetramer; dimer of dimers.

The protein localises to the cytoplasm. The enzyme catalyses L-aspartate 4-semialdehyde + pyruvate = (2S,4S)-4-hydroxy-2,3,4,5-tetrahydrodipicolinate + H2O + H(+). Its pathway is amino-acid biosynthesis; L-lysine biosynthesis via DAP pathway; (S)-tetrahydrodipicolinate from L-aspartate: step 3/4. Functionally, catalyzes the condensation of (S)-aspartate-beta-semialdehyde [(S)-ASA] and pyruvate to 4-hydroxy-tetrahydrodipicolinate (HTPA). The protein is 4-hydroxy-tetrahydrodipicolinate synthase of Thermoanaerobacter pseudethanolicus (strain ATCC 33223 / 39E) (Clostridium thermohydrosulfuricum).